The following is a 27-amino-acid chain: Phospholipase A2 taicatoxin (27 aa).

The protein belongs to the phospholipase A2 family. Group I subfamily. Heterotrimer composed of an alpha-neurotoxin-like peptide of 8 kDa (AC P0CJ35), this neurotoxic phospholipase of 16 kDa and a serine protease inhibitor of 7 kDa (AC B7S4N9) at an approximate stoichiometry of 1:1:4; non-covalently linked. The cofactor is Ca(2+). Contains 7 disulfide bonds. In terms of tissue distribution, expressed by the venom gland.

It localises to the secreted. The catalysed reaction is a 1,2-diacyl-sn-glycero-3-phosphocholine + H2O = a 1-acyl-sn-glycero-3-phosphocholine + a fatty acid + H(+). In terms of biological role, heterotrimer: blocks the voltage-dependent L-type calcium channels from the heart, and the small conductance calcium-activated potassium channels in the chromaffin cells and in the brain. Is very toxic to mice. Functionally, monomer: Snake venom phospholipase A2 (PLA2) that has neurotoxic activities. Voltage-dependently affects ionic currents in chick (Gallus domesticus) dorsal root ganglion cells. PLA2 catalyzes the calcium-dependent hydrolysis of the 2-acyl groups in 3-sn-phosphoglycerides. In Oxyuranus scutellatus scutellatus (Australian taipan), this protein is Phospholipase A2 taicatoxin.